Here is a 399-residue protein sequence, read N- to C-terminus: Succinate--CoA ligase [ADP-forming] subunit beta (399 aa).

One can recognise an ATP-grasp domain in the interval 9–254; sequence KELLAKYGVG…ETEEDPAEIE (246 aa). Residues Lys-46, 53–55, Val-112, and Glu-117 contribute to the ATP site; that span reads GRG. Residues Asn-209 and Asp-223 each coordinate Mg(2+). Residues Asn-274 and 331–333 each bind substrate; that span reads GIM.

The protein belongs to the succinate/malate CoA ligase beta subunit family. In terms of assembly, heterotetramer of two alpha and two beta subunits. Mg(2+) serves as cofactor.

The catalysed reaction is succinate + ATP + CoA = succinyl-CoA + ADP + phosphate. The enzyme catalyses GTP + succinate + CoA = succinyl-CoA + GDP + phosphate. Its pathway is carbohydrate metabolism; tricarboxylic acid cycle; succinate from succinyl-CoA (ligase route): step 1/1. Functionally, succinyl-CoA synthetase functions in the citric acid cycle (TCA), coupling the hydrolysis of succinyl-CoA to the synthesis of either ATP or GTP and thus represents the only step of substrate-level phosphorylation in the TCA. The beta subunit provides nucleotide specificity of the enzyme and binds the substrate succinate, while the binding sites for coenzyme A and phosphate are found in the alpha subunit. This chain is Succinate--CoA ligase [ADP-forming] subunit beta, found in Novosphingobium aromaticivorans (strain ATCC 700278 / DSM 12444 / CCUG 56034 / CIP 105152 / NBRC 16084 / F199).